Consider the following 1955-residue polypeptide: Callose synthase 3 (1955 aa).

The Cytoplasmic portion of the chain corresponds to 1 to 488 (MSATRGGPDQ…FWHVFRSFDR (488 aa)). Residues 489-509 (MWSFYILCLQAMIIMAWDGGQ) traverse the membrane as a helical segment. Over 510 to 521 (PSSVFGADVFKK) the chain is Extracellular. The chain crosses the membrane as a helical span at residues 522-542 (VLSVFITAAIMKLGQAVLDVI). Residues 543–558 (LNFKAHQSMTLHVKLR) are Cytoplasmic-facing. The helical transmembrane segment at 559–579 (YILKVFSAAAWVIILPVTYAY) threads the bilayer. At 580 to 604 (SWKDPPAFARTIKSWFGSAMHSPSL) the chain is on the extracellular side. A helical transmembrane segment spans residues 605-625 (FIIAVVSYLSPNMLAGVMFLF). Topologically, residues 626–660 (PLLRRFLERSNYRIVMLMMWWSQPRLYVGRGMHES) are cytoplasmic. The chain crosses the membrane as a helical span at residues 661–681 (AFSLFKYTMFWVLLIATKLAF). Over 682–717 (SYYIEIRPLVAPTQAIMKARVTNFQWHEFFPRAKNN) the chain is Extracellular. Residues 718–738 (IGVVIALWAPIILVYFMDSQI) traverse the membrane as a helical segment. At 739 to 1517 (WYAIFSTLFG…FDFFRMMSCY (779 aa)) the chain is on the cytoplasmic side. Residues 1518–1538 (FTTVGFYFSTLITVLTVYIFL) traverse the membrane as a helical segment. At 1539–1566 (YGRLYLVLSGLEQGLSTQKGIRDNTPLQ) the chain is on the extracellular side. Residues 1567 to 1587 (IALASQSFVQIGFLMALPMLM) traverse the membrane as a helical segment. Residues 1588 to 1597 (EIGLERGFRT) are Cytoplasmic-facing. The chain crosses the membrane as a helical span at residues 1598 to 1618 (ALSEFVLMQLQLAPVFFTFSL). Over 1619-1661 (GTKTHYYGRTLLHGGAKYRSTGRGFVVFHAKFADNYRLYSRSH) the chain is Extracellular. Residues 1662 to 1682 (FVKGLEMMLLLVVYQIFGSAY) form a helical membrane-spanning segment. Over 1683–1688 (RGVLAY) the chain is Cytoplasmic. The helical transmembrane segment at 1689–1709 (LLITISMWFMVGTWLFAPFLF) threads the bilayer. The Extracellular portion of the chain corresponds to 1710–1761 (NPSGFEWQKIVDDWTDWNKWINNIGGIGVPAEKSWESWWEEEQEHLRYSGKR). The chain crosses the membrane as a helical span at residues 1762-1782 (GIVVEILLALRFFIYQYGLVY). Topologically, residues 1783-1792 (HLTITEKTKN) are cytoplasmic. Residues 1793-1813 (FLVYGVSWLVIFLILFVMKTV) traverse the membrane as a helical segment. At 1814–1833 (SVGRRRFSASFQLMFRLIKG) the chain is on the extracellular side. A helical transmembrane segment spans residues 1834–1854 (LIFMTFIAIIVILITLAHMTI). Residues 1855 to 1856 (QD) are Cytoplasmic-facing. A helical membrane pass occupies residues 1857-1877 (IIVCILAFMPTGWGMLLIAQA). The Extracellular portion of the chain corresponds to 1878–1899 (CKPVVHRAGFWGSVRTLARGYE). A helical membrane pass occupies residues 1900-1920 (IVMGLLLFTPVAFLAWFPFVS). The Cytoplasmic portion of the chain corresponds to 1921–1955 (EFQTRMLFNQAFSRGLQISRILGGHRKDRSSRNKE).

This sequence belongs to the glycosyltransferase 48 family.

The protein resides in the cell membrane. It carries out the reaction [(1-&gt;3)-beta-D-glucosyl](n) + UDP-alpha-D-glucose = [(1-&gt;3)-beta-D-glucosyl](n+1) + UDP + H(+). Functionally, involved in callose synthesis at the forming cell plate during cytokinesis. During plant growth and development, callose is found as a transitory component of the cell plate in dividing cells, is a major component of pollen mother cell walls and pollen tubes, and is found as a structural component of plasmodesmatal canals. The sequence is that of Callose synthase 3 (CALS3) from Arabidopsis thaliana (Mouse-ear cress).